A 384-amino-acid polypeptide reads, in one-letter code: Somatostatin receptor type 4 (384 aa).

Positions 1 to 34 (MNTPATLPLGGEDTTWTPGINASWAPDEEEDAVR) are disordered. The Extracellular segment spans residues 1 to 41 (MNTPATLPLGGEDTTWTPGINASWAPDEEEDAVRSDGTGTA). N-linked (GlcNAc...) asparagine glycosylation is present at asparagine 21. The helical transmembrane segment at 42–69 (GMVTIQCIYALVCLVGLVGNALVIFVIL) threads the bilayer. The Cytoplasmic portion of the chain corresponds to 70–79 (RYAKMKTATN). Residues 80 to 105 (IYLLNLAVADELFMLSVPFVASAAAL) form a helical membrane-spanning segment. At 106-116 (RHWPFGAVLCR) the chain is on the extracellular side. A disulfide bridge connects residues cysteine 115 and cysteine 194. Residues 117–138 (AVLSVDGLNMFTSVFCLTVLSV) traverse the membrane as a helical segment. The Cytoplasmic portion of the chain corresponds to 139-160 (DRYVAVVHPLRAATYRRPSVAK). A helical membrane pass occupies residues 161–181 (LINLGVWLASLLVTLPIAVFA). Residues 182–203 (DTRPARGGEAVACNLHWPHPAW) lie on the Extracellular side of the membrane. A helical transmembrane segment spans residues 204 to 228 (SAVFVIYTFLLGFLLPVLAIGLCYL). The Cytoplasmic portion of the chain corresponds to 229–254 (LIVGKMRAVALRAGWQQRRRSEKKIT). A helical transmembrane segment spans residues 255-280 (RLVLMVVTVFVLCWMPFYVVQLLNLF). Over 281 to 287 (VTSLDAT) the chain is Extracellular. A helical transmembrane segment spans residues 288–311 (VNHVSLILSYANSCANPILYGFLS). Residues 312 to 384 (DNFRRSFQRV…RVPFTKTTTF (73 aa)) are Cytoplasmic-facing. The S-palmitoyl cysteine moiety is linked to residue cysteine 323.

The protein belongs to the G-protein coupled receptor 1 family. As to expression, brain, lung, heart and islets. Moderate levels in the hippocampus, cortex and olfactory bulb.

The protein localises to the cell membrane. Its function is as follows. Receptor for somatostatin-14. The activity of this receptor is mediated by G proteins which inhibits adenylyl cyclase. It is functionally coupled not only to inhibition of adenylate cyclase, but also to activation of both arachidonate release and mitogen-activated protein (MAP) kinase cascade. This chain is Somatostatin receptor type 4 (Sstr4), found in Rattus norvegicus (Rat).